The chain runs to 308 residues: N-acetylmuramic acid 6-phosphate etherase (308 aa).

An SIS domain is found at 62–225; sequence TAARLRQGGR…STGVMVQLGK (164 aa). The Proton donor role is filled by Glu90. Glu121 is an active-site residue.

The protein belongs to the GCKR-like family. MurNAc-6-P etherase subfamily. Homodimer.

It carries out the reaction N-acetyl-D-muramate 6-phosphate + H2O = N-acetyl-D-glucosamine 6-phosphate + (R)-lactate. It participates in amino-sugar metabolism; N-acetylmuramate degradation. In terms of biological role, specifically catalyzes the cleavage of the D-lactyl ether substituent of MurNAc 6-phosphate, producing GlcNAc 6-phosphate and D-lactate. The polypeptide is N-acetylmuramic acid 6-phosphate etherase (Thermosynechococcus vestitus (strain NIES-2133 / IAM M-273 / BP-1)).